The chain runs to 100 residues: Dromyosuppressin (100 aa).

An N-terminal signal peptide occupies residues 1–24 (MSFAQFFVACCLAIVLLAVSNTRA). The propeptide occupies 25–84 (AVQGPPLCQSGIVEEMPPHIRKVCQALENSDQLTSALKSYINNEASALVANSDDLLKNYN). Phe-96 is subject to Phenylalanine amide.

Belongs to the myosuppressin family.

The protein resides in the secreted. Its function is as follows. Myoinhibiting neuropeptide. This Drosophila melanogaster (Fruit fly) protein is Dromyosuppressin.